The primary structure comprises 384 residues: Acetylornithine aminotransferase (384 aa).

Residues 94–95 (GT) and F121 contribute to the pyridoxal 5'-phosphate site. R124 is a binding site for N(2)-acetyl-L-ornithine. 206-209 (DEVQ) provides a ligand contact to pyridoxal 5'-phosphate. K235 bears the N6-(pyridoxal phosphate)lysine mark. S263 serves as a coordination point for N(2)-acetyl-L-ornithine. T264 contacts pyridoxal 5'-phosphate.

Belongs to the class-III pyridoxal-phosphate-dependent aminotransferase family. ArgD subfamily. In terms of assembly, homodimer. Requires pyridoxal 5'-phosphate as cofactor.

It is found in the cytoplasm. The enzyme catalyses N(2)-acetyl-L-ornithine + 2-oxoglutarate = N-acetyl-L-glutamate 5-semialdehyde + L-glutamate. Its pathway is amino-acid biosynthesis; L-arginine biosynthesis; N(2)-acetyl-L-ornithine from L-glutamate: step 4/4. This chain is Acetylornithine aminotransferase, found in Listeria innocua serovar 6a (strain ATCC BAA-680 / CLIP 11262).